The primary structure comprises 1417 residues: Non-structural polyprotein 1AB (1417 aa).

The stretch at Lys-105 to Glu-143 forms a coiled coil. The next 5 membrane-spanning stretches (helical) occupy residues Met-155–Ala-175, Val-240–Gly-260, Val-287–Val-307, Leu-314–Met-334, and Gly-345–Thr-365. Residues His-462, Asp-490, and Ser-552 each act as charge relay system; for serine protease activity in the active site. Residues Val-588–Pro-615 adopt a coiled-coil conformation. Residue Tyr-694 is modified to O-(5'-phospho-RNA)-tyrosine. Residues Asn-753–Gln-813 are disordered. Residues Ser-784–Gln-796 are compositionally biased toward basic and acidic residues. A RdRp catalytic domain is found at Lys-1162–Glu-1288.

Belongs to the astroviridae polyprotein 1AB family. As to quaternary structure, monomer. In terms of processing, cleaved by the viral and host proteases. The protease is probably autocatalytically cleaved.

It localises to the host membrane. It carries out the reaction RNA(n) + a ribonucleoside 5'-triphosphate = RNA(n+1) + diphosphate. In terms of biological role, responsible for the cleavage of the polyprotein into functional products. Protein covalently attached to the 5' extremity of the genomic and subgenomic RNAs. It may serve as a primer for the replicase. This chain is Non-structural polyprotein 1AB (ORF1), found in Human astrovirus-8 (HAstV-8).